A 60-amino-acid chain; its full sequence is Protein translocase subunit SecE (60 aa).

A helical membrane pass occupies residues 31–51 (IIVVSTVIFFLVFFYALDIGI).

The protein belongs to the SecE/SEC61-gamma family. Component of the Sec protein translocase complex. Heterotrimer consisting of SecY, SecE and SecG subunits. The heterotrimers can form oligomers, although 1 heterotrimer is thought to be able to translocate proteins. Interacts with the ribosome. Interacts with SecDF, and other proteins may be involved. Interacts with SecA.

The protein resides in the cell membrane. Essential subunit of the Sec protein translocation channel SecYEG. Clamps together the 2 halves of SecY. May contact the channel plug during translocation. This Staphylococcus epidermidis (strain ATCC 35984 / DSM 28319 / BCRC 17069 / CCUG 31568 / BM 3577 / RP62A) protein is Protein translocase subunit SecE.